A 599-amino-acid chain; its full sequence is Proline dehydrogenase 1, mitochondrial (599 aa).

Disordered stretches follow at residues 20 to 39 (STKP…LRGC) and 152 to 180 (EEAE…EKQY). Over residues 23-39 (PQAQEQPPASPEALRGC) the composition is skewed to low complexity. Residues 153–180 (EAERKEMESCTSEAERDGSGANKREKQY) show a composition bias toward basic and acidic residues. N6-acetyllysine occurs at positions 356, 367, and 485.

The protein belongs to the proline oxidase family. Requires FAD as cofactor. As to expression, expressed in liver, kidney, heart and to a lesser extent in brain, lung and muscle.

It localises to the mitochondrion matrix. The enzyme catalyses L-proline + a quinone = (S)-1-pyrroline-5-carboxylate + a quinol + H(+). It participates in amino-acid degradation; L-proline degradation into L-glutamate; L-glutamate from L-proline: step 1/2. Converts proline to delta-1-pyrroline-5-carboxylate. In Mus musculus (Mouse), this protein is Proline dehydrogenase 1, mitochondrial (Prodh).